A 178-amino-acid polypeptide reads, in one-letter code: Protein GrpE (178 aa).

Composition is skewed to basic and acidic residues over residues 1–19 and 30–42; these read MAKH…KEEA and SPEK…ANER. The interval 1-42 is disordered; that stretch reads MAKHKQEEHPEDVEVKEEAVETAEQAESASPEKSELELANER.

It belongs to the GrpE family. In terms of assembly, homodimer.

The protein localises to the cytoplasm. Participates actively in the response to hyperosmotic and heat shock by preventing the aggregation of stress-denatured proteins, in association with DnaK and GrpE. It is the nucleotide exchange factor for DnaK and may function as a thermosensor. Unfolded proteins bind initially to DnaJ; upon interaction with the DnaJ-bound protein, DnaK hydrolyzes its bound ATP, resulting in the formation of a stable complex. GrpE releases ADP from DnaK; ATP binding to DnaK triggers the release of the substrate protein, thus completing the reaction cycle. Several rounds of ATP-dependent interactions between DnaJ, DnaK and GrpE are required for fully efficient folding. This chain is Protein GrpE, found in Streptococcus sanguinis (strain SK36).